The primary structure comprises 459 residues: Serine--tRNA ligase (459 aa).

254–256 (TAE) serves as a coordination point for L-serine. Residues 285 to 287 (RKE) and valine 301 contribute to the ATP site. Glutamate 308 contributes to the L-serine binding site. 372-375 (EMVS) is a binding site for ATP. Threonine 408 contributes to the L-serine binding site.

It belongs to the class-II aminoacyl-tRNA synthetase family. Type-1 seryl-tRNA synthetase subfamily. As to quaternary structure, homodimer. The tRNA molecule binds across the dimer.

The protein resides in the cytoplasm. The enzyme catalyses tRNA(Ser) + L-serine + ATP = L-seryl-tRNA(Ser) + AMP + diphosphate + H(+). It catalyses the reaction tRNA(Sec) + L-serine + ATP = L-seryl-tRNA(Sec) + AMP + diphosphate + H(+). The protein operates within aminoacyl-tRNA biosynthesis; selenocysteinyl-tRNA(Sec) biosynthesis; L-seryl-tRNA(Sec) from L-serine and tRNA(Sec): step 1/1. In terms of biological role, catalyzes the attachment of serine to tRNA(Ser). Is also able to aminoacylate tRNA(Sec) with serine, to form the misacylated tRNA L-seryl-tRNA(Sec), which will be further converted into selenocysteinyl-tRNA(Sec). The polypeptide is Serine--tRNA ligase (Staphylothermus marinus (strain ATCC 43588 / DSM 3639 / JCM 9404 / F1)).